The primary structure comprises 199 residues: uncharacterized protein (199 aa).

This is an uncharacterized protein from Shigella flexneri.